Here is a 230-residue protein sequence, read N- to C-terminus: Sugar fermentation stimulation protein homolog (230 aa).

The protein belongs to the SfsA family.

The sequence is that of Sugar fermentation stimulation protein homolog from Clostridium botulinum (strain Loch Maree / Type A3).